Reading from the N-terminus, the 64-residue chain is Disintegrin VA6 (64 aa).

Residues 1 to 64 (NSANPCCDPV…SDCPRNPYKS (64 aa)) form the Disintegrin domain. 4 disulfides stabilise this stretch: Cys-6–Cys-29, Cys-20–Cys-26, Cys-25–Cys-50, and Cys-38–Cys-57. A Cell attachment site motif is present at residues 42-44 (RGD).

The protein belongs to the venom metalloproteinase (M12B) family. P-II subfamily. P-IId sub-subfamily. In terms of assembly, homodimer; disulfide-linked. As to expression, expressed by the venom gland.

It is found in the secreted. Poor inhibitor of platelet aggregation. The disintegrin inhibits the adhesion of cells expressing the RGD-dependent integrin alpha-5/beta-1 (ITGA5/ITGB1) to immobilized fibronectin. Inhibition on alpha-IIb/beta-3 (ITGA2B/ITGB3) is low, and there is no inhibition on alpha-1/beta-1 (ITGA1/ITGB1), alpha-2/beta-1 (ITGA2/ITGB1) and alpha-6/beta-1 (ITGA6/ITGB1). The sequence is that of Disintegrin VA6 from Vipera ammodytes ammodytes (Western sand viper).